A 944-amino-acid polypeptide reads, in one-letter code: ATP-dependent RNA helicase DDX42 (944 aa).

Residues 1–18 (MNWNKGGPGTKRGFGFGG) are compositionally biased toward gly residues. 3 disordered regions span residues 1-119 (MNWN…LEAF), 131-155 (MKRL…EEED), and 182-203 (EYDS…LPPI). Over residues 35–52 (SHSAFGTAGSSAAFAKSG) the composition is skewed to low complexity. Positions 70–84 (DEENAYFEDEEEDNS) are enriched in acidic residues. Residues 120–157 (MAEVEDQAARDMKRLEDKDKEKKNAKGIRDDIEEEDDQ) are a coiled coil. Basic and acidic residues predominate over residues 131–149 (MKRLEDKDKEKKNAKGIRD). The Q motif signature appears at 253–281 (SSFARFGFDEQLMHQIRKSEYTQPTPIQC). The Helicase ATP-binding domain maps to 284–459 (VPVAMSGRDM…RDILIDPIRV (176 aa)). 297 to 304 (AKTGSGKT) lines the ATP pocket. Residues 407-410 (DEAD) carry the DEAD box motif. A Helicase C-terminal domain is found at 487-632 (WLTRRLVEFT…HVSKELLDLA (146 aa)). Disordered regions lie at residues 642–682 (RFKG…VMSN), 723–753 (GSSA…AANP), and 794–944 (SANA…RWDS). Positions 723–737 (GSSAAGASGWTSAGS) are enriched in low complexity. The span at 738–752 (LNSVPTSSAQQNAAN) shows a compositional bias: polar residues. The span at 794-814 (SANASAGNREGVGSAGSAPRG) shows a compositional bias: low complexity. Positions 815–824 (GSSGGGGGGI) are enriched in gly residues. 2 stretches are compositionally biased toward basic and acidic residues: residues 825–887 (VRER…RHFT) and 901–926 (NISE…DNKT).

Belongs to the DEAD box helicase family. DDX42 subfamily. Transient component of the SF3B subcomplex of the 17S U2 SnRNP complex.

The protein resides in the cytoplasm. Its subcellular location is the nucleus. It catalyses the reaction ATP + H2O = ADP + phosphate + H(+). In terms of biological role, ATP-dependent RNA helicase that binds to partially double-stranded RNAs (dsRNAs) in order to unwind RNA secondary structures. Unwinding is promoted in the presence of single-strand binding proteins. Also mediates RNA duplex formation thereby displacing the single-strand RNA binding protein. ATP and ADP modulate its activity: ATP binding and hydrolysis by DDX42 triggers RNA strand separation, whereas the ADP-bound form of the protein triggers annealing of complementary RNA strands. Required for assembly of the 17S U2 SnRNP complex of the spliceosome, a large ribonucleoprotein complex that removes introns from transcribed pre-mRNAs: DDX42 associates transiently with the SF3B subcomplex of the 17S U2 SnRNP complex and is released after fulfilling its role in the assembly of 17S U2 SnRNP. The protein is ATP-dependent RNA helicase DDX42 (DDX42) of Gallus gallus (Chicken).